A 181-amino-acid polypeptide reads, in one-letter code: ATP-dependent protease subunit HslV (181 aa).

The active site involves T9. Positions 166, 169, and 172 each coordinate Na(+).

This sequence belongs to the peptidase T1B family. HslV subfamily. A double ring-shaped homohexamer of HslV is capped on each side by a ring-shaped HslU homohexamer. The assembly of the HslU/HslV complex is dependent on binding of ATP.

The protein resides in the cytoplasm. It catalyses the reaction ATP-dependent cleavage of peptide bonds with broad specificity.. Its activity is regulated as follows. Allosterically activated by HslU binding. Protease subunit of a proteasome-like degradation complex believed to be a general protein degrading machinery. The protein is ATP-dependent protease subunit HslV of Staphylococcus aureus (strain bovine RF122 / ET3-1).